We begin with the raw amino-acid sequence, 693 residues long: Triadin (693 aa).

At 1–47 the chain is on the cytoplasmic side; it reads MTEITAEGNASTTTTVIDNKNGCIPKSPGKVLKRSVTEDIVTTFSSP. A helical transmembrane segment spans residues 48–68; the sequence is AAWLLVIALIITWSAVAIVMF. The Lumenal segment spans residues 69 to 693; the sequence is DLVDYKNFSA…NSPGQKQQEQ (625 aa). Positions 117–130 are enriched in acidic residues; the sequence is EGDEDDEDADEDID. 3 disordered regions span residues 117 to 260, 278 to 649, and 666 to 693; these read EGDE…AVHE, GDLK…QTRP, and FQFPVTPVQQPGENPGKTNSPGQKQQEQ. Basic and acidic residues-rich tracts occupy residues 131–241 and 249–260; these read KGEI…KETP and KKDDKEMPAVHE. Phosphoserine is present on Ser-301. Positions 305 to 352 are enriched in basic and acidic residues; the sequence is LEEKEKEEKKKMEKKDTSDTKKKEKEVKKKSEETTIDGKGKEPGKPPE. Over residues 354 to 364 the composition is skewed to polar residues; the sequence is KQMTAKLTTQA. Basic and acidic residues-rich tracts occupy residues 366-427 and 438-502; these read ARKD…KEEI and GKKE…KEAK. Asn-515 is a glycosylation site (N-linked (GlcNAc...) asparagine). 2 stretches are compositionally biased toward basic and acidic residues: residues 526-547 and 558-579; these read VKPEKAEHQEKGHPSIKKDKPK and DSGKKKIEKSEKESKVPTREEN. N-linked (GlcNAc...) asparagine glycosylation is present at Asn-584. Basic and acidic residues predominate over residues 587-637; sequence KAEKPGKIPKDSKEAPASKKDKEDSKEAPTSKKDKEDSKDVPHSKKDKEVT. Residues 672 to 693 show a composition bias toward polar residues; that stretch reads PVQQPGENPGKTNSPGQKQQEQ.

In terms of assembly, homooligomer of variable subunit number; disulfide-linked. Interacts with CASQ1 and RYR1 in skeletal muscle. Interacts with CASQ2. Post-translationally, phosphorylated by CaMK2. In terms of processing, N-glycosylated. Detected in heart (at protein level). Detected in heart.

It localises to the sarcoplasmic reticulum membrane. Functionally, contributes to the regulation of lumenal Ca2+ release via the sarcoplasmic reticulum calcium release channels RYR1 and RYR2, a key step in triggering skeletal and heart muscle contraction. Required for normal organization of the triad junction, where T-tubules and the sarcoplasmic reticulum terminal cisternae are in close contact. Required for normal skeletal muscle strength. Plays a role in excitation-contraction coupling in the heart and in regulating the rate of heart beats. In Mus musculus (Mouse), this protein is Triadin.